A 728-amino-acid polypeptide reads, in one-letter code: Phosphoribosylformylglycinamidine synthase subunit PurL (728 aa).

H54 is an active-site residue. ATP contacts are provided by Y57 and K96. Residue E98 participates in Mg(2+) binding. Substrate-binding positions include 99 to 102 (SHNH) and R121. H100 acts as the Proton acceptor in catalysis. D122 is a binding site for Mg(2+). Residue Q245 participates in substrate binding. D273 lines the Mg(2+) pocket. 317-319 (ETQ) is a binding site for substrate. Residues D495 and G532 each contribute to the ATP site. N533 lines the Mg(2+) pocket. S535 provides a ligand contact to substrate.

This sequence belongs to the FGAMS family. As to quaternary structure, monomer. Part of the FGAM synthase complex composed of 1 PurL, 1 PurQ and 2 PurS subunits.

The protein resides in the cytoplasm. The catalysed reaction is N(2)-formyl-N(1)-(5-phospho-beta-D-ribosyl)glycinamide + L-glutamine + ATP + H2O = 2-formamido-N(1)-(5-O-phospho-beta-D-ribosyl)acetamidine + L-glutamate + ADP + phosphate + H(+). Its pathway is purine metabolism; IMP biosynthesis via de novo pathway; 5-amino-1-(5-phospho-D-ribosyl)imidazole from N(2)-formyl-N(1)-(5-phospho-D-ribosyl)glycinamide: step 1/2. Its function is as follows. Part of the phosphoribosylformylglycinamidine synthase complex involved in the purines biosynthetic pathway. Catalyzes the ATP-dependent conversion of formylglycinamide ribonucleotide (FGAR) and glutamine to yield formylglycinamidine ribonucleotide (FGAM) and glutamate. The FGAM synthase complex is composed of three subunits. PurQ produces an ammonia molecule by converting glutamine to glutamate. PurL transfers the ammonia molecule to FGAR to form FGAM in an ATP-dependent manner. PurS interacts with PurQ and PurL and is thought to assist in the transfer of the ammonia molecule from PurQ to PurL. The sequence is that of Phosphoribosylformylglycinamidine synthase subunit PurL from Macrococcus caseolyticus (strain JCSC5402) (Macrococcoides caseolyticum).